The sequence spans 105 residues: Large ribosomal subunit protein uL24 (105 aa).

This sequence belongs to the universal ribosomal protein uL24 family. As to quaternary structure, part of the 50S ribosomal subunit.

In terms of biological role, one of two assembly initiator proteins, it binds directly to the 5'-end of the 23S rRNA, where it nucleates assembly of the 50S subunit. One of the proteins that surrounds the polypeptide exit tunnel on the outside of the subunit. The chain is Large ribosomal subunit protein uL24 from Dictyoglomus thermophilum (strain ATCC 35947 / DSM 3960 / H-6-12).